A 723-amino-acid polypeptide reads, in one-letter code: Zinc finger CCCH domain-containing protein 11A (723 aa).

3 C3H1-type zinc fingers span residues Ser2 to Ala29, Leu31 to Ile57, and Lys60 to Gly87. Disordered regions lie at residues Glu142–Asp208, Lys223–Asn256, Lys404–Glu428, Glu450–Leu526, and Val565–Ser681. The segment covering Ala160–Glu175 has biased composition (acidic residues). Residues Lys376–Lys411 adopt a coiled-coil conformation. Positions Pro511–Gln522 are enriched in polar residues. The segment covering Lys609–Pro620 has biased composition (low complexity). Polar residues predominate over residues Leu637–Glu649. Over residues Gln650 to Ser672 the composition is skewed to low complexity.

Its subcellular location is the nucleus speckle. Its function is as follows. Through its association with TREX complex components, may participate in the export and post-transcriptional coordination of selected mRNA transcripts. Binds RNA. The polypeptide is Zinc finger CCCH domain-containing protein 11A (ZC3H11A) (Gallus gallus (Chicken)).